The sequence spans 266 residues: Norfluorocurarine synthase 1 (266 aa).

Residues 11-121 (HFVLVHGAGH…VMPDAVHPPS (111 aa)) form the AB hydrolase-1 domain. Catalysis depends on residues serine 86, aspartate 216, and histidine 244.

The protein belongs to the AB hydrolase superfamily. Homodimer. As to expression, mainly expressed in roots.

The enzyme catalyses 17-dehydropreakuammicine + H2O = norfluorocurarine + methanol + CO2. The protein operates within alkaloid biosynthesis. Its function is as follows. Hydrolase involved in the biosynthesis of curare monoterpene indole alkaloids (MIAs), natural products such as strychnine, a neurotoxic compound used as a pesticide to control rodents, and its pharmacologically active derivatives, including brucine, used to regulate blood pressure. Curare alkaloids act as animal glycine receptor antagonists. Catalyzes the conversion of dehydropreakuammicine to norfluorocurarine. The chain is Norfluorocurarine synthase 1 from Strychnos nux-vomica (Poison nut).